A 138-amino-acid polypeptide reads, in one-letter code: Large ribosomal subunit protein uL16 (138 aa).

The segment covering 1-13 has biased composition (basic residues); the sequence is MLQPKRRKYRKEQ. The disordered stretch occupies residues 1–22; sequence MLQPKRRKYRKEQKGRNTGVAT.

It belongs to the universal ribosomal protein uL16 family. As to quaternary structure, part of the 50S ribosomal subunit.

In terms of biological role, binds 23S rRNA and is also seen to make contacts with the A and possibly P site tRNAs. This is Large ribosomal subunit protein uL16 from Paraburkholderia phymatum (strain DSM 17167 / CIP 108236 / LMG 21445 / STM815) (Burkholderia phymatum).